Reading from the N-terminus, the 435-residue chain is MKIPVTADAESASKDGLQHDDIRATATVRDRIKQFSAEASIPLEKASFSRQAPSQNPSITAKPPIPPQRAALKPGTKLVKATGTELCGNQQHGRSRNISPIAHFPAVPLSNKNTSAILSSDSETGAELADRREFTASKAVRHGSRDPHAEMSSWKSPTPLPQRKKEAPPVPPRSSQLSTESELLQLDPPSLHTDQEGSGVNHTLEVRESDISDSALADAMTASYLIPSHAALGSKRGLKQPPPPPPPRQRGSPSQPLLQLSSDSSKVNPPALGPDEILKRGMDMLDEPKSGSELPPKPPRRVTFNPNPEVFQIESGNVVQGQVISSERKRYEEVWEANRGVARFGVMHDPNVDQKVIRKSLAYEDLVVDLVVRDIWSRSRLPQAELAKIWKLVSHDAVGMLSREEFVVGMWLIDQCLKGHGLPTNVPKSVWKSVQ.

4 disordered regions span residues 1-20, 39-71, 136-204, and 233-277; these read MKIPVTADAESASKDGLQHD, ASIPLEKASFSRQAPSQNPSITAKPPIPPQRAA, ASKA…NHTL, and GSKR…PDEI. The segment covering 11–20 has biased composition (basic and acidic residues); sequence SASKDGLQHD. Polar residues predominate over residues 48-59; the sequence is FSRQAPSQNPSI. Low complexity-rich tracts occupy residues 174-186 and 249-265; these read SSQLSTESELLQL and QRGSPSQPLLQLSSDSS. One can recognise an EH domain in the interval 327–435; it reads ERKRYEEVWE…VPKSVWKSVQ (109 aa).

The protein belongs to the IRS4 family.

In terms of biological role, positive regulator of phosphatidylinositol 4,5-bisphosphate turnover and negatively regulates signaling through the cell integrity pathway. Involved in rDNA silencing. This Coccidioides immitis (strain RS) (Valley fever fungus) protein is Increased rDNA silencing protein 4 (IRS4).